The following is an 87-amino-acid chain: UPF0175 protein AF_0597 (87 aa).

It belongs to the UPF0175 family.

The chain is UPF0175 protein AF_0597 from Archaeoglobus fulgidus (strain ATCC 49558 / DSM 4304 / JCM 9628 / NBRC 100126 / VC-16).